Here is a 121-residue protein sequence, read N- to C-terminus: UPF0102 protein Mvan_2202 (121 aa).

This sequence belongs to the UPF0102 family.

This Mycolicibacterium vanbaalenii (strain DSM 7251 / JCM 13017 / BCRC 16820 / KCTC 9966 / NRRL B-24157 / PYR-1) (Mycobacterium vanbaalenii) protein is UPF0102 protein Mvan_2202.